A 128-amino-acid chain; its full sequence is Cystatin-2 (128 aa).

A signal peptide spans 1–19 (MSSFKVAVLLIAVYGASQG). One can recognise a Cystatin domain in the interval 29 to 116 (QDPTEARFLE…CVAVIYHVPW (88 aa)). Disulfide bonds link Cys84–Cys96 and Cys107–Cys127.

Belongs to the cystatin family. Widely expressed. Detected in salivary glands (at protein level), gut (at protein level), ovaries, and Malpighian tubules.

It localises to the secreted. Inhibitor of cysteine proteinases with broad specificity for mammalian cathepsins, including endopeptidases (cathepsins L and S) and exopeptidases (cathepsins B, C and H). Also inhibits endogenous cathepsin B-like and cathepsin C-like proteinases. Does not inhibit human legumain. May mimic specific host-derived cystatin(s) to interfere with its/their function in controlling cathepsin-mediated proteolysis. Affects the function of antigen-presenting mouse dendritic cells by reducing the production of the pro-inflammatory cytokines TNF and interleukin-12, and proliferation of antigen-specific CD4+ T-cells, suggesting it may suppress the host adaptive immune response. It is noteworthy that immunization of mice with this protein reduces O.moubata survival in infestation experiments. This is Cystatin-2 from Ornithodoros moubata (Soft tick).